A 438-amino-acid polypeptide reads, in one-letter code: Iroquois-class homeodomain protein IRX-6 (438 aa).

A DNA-binding region (homeobox) is located at residues 143–205 (SAGRRKNATR…NARRRLKKEN (63 aa)). 2 disordered regions span residues 205–270 (NKMT…EAAV) and 388–438 (PRDS…GAEG). A compositionally biased stretch (basic and acidic residues) spans 214 to 223 (KGGEERKADS). Over residues 252–268 (LEDLEEEEEEEEAEEEA) the composition is skewed to acidic residues.

This sequence belongs to the TALE/IRO homeobox family. Expressed in a subset of retinal ganglion cells and bipolar cells; including in type 2 and type 3a bipolar cells.

Its subcellular location is the nucleus. Transcription factor. Binds to the iroquois binding site (IBS) motif of target genes to regulate gene expression; functions as a transcriptional activator or repressor. Modulates expression of RCVRN, VSX1, BHLHE22/BHLHB5 and TACR3/Nk3r. Required downstream of retinal bipolar cell specification for the terminal differentiation of type 2, type 3a and possibly type 6 bipolar cells. The protein is Iroquois-class homeodomain protein IRX-6 (Irx6) of Mus musculus (Mouse).